The primary structure comprises 461 residues: Cysteine--tRNA ligase (461 aa).

Cys-28 contributes to the Zn(2+) binding site. Positions 30 to 40 (ITVYDLCHIGH) match the 'HIGH' region motif. Positions 209, 234, and 238 each coordinate Zn(2+). The 'KMSKS' region motif lies at 266–270 (KMSKS). Lys-269 is an ATP binding site.

The protein belongs to the class-I aminoacyl-tRNA synthetase family. Monomer. The cofactor is Zn(2+).

It is found in the cytoplasm. It catalyses the reaction tRNA(Cys) + L-cysteine + ATP = L-cysteinyl-tRNA(Cys) + AMP + diphosphate. In Salmonella agona (strain SL483), this protein is Cysteine--tRNA ligase.